We begin with the raw amino-acid sequence, 329 residues long: Myoblast determination protein 1 homolog (329 aa).

Residues 160–211 (DRRKAATMRERRRLRKVNEAFEVVKQRTCPNPNQRLPKVEILRSAIDYINTL) enclose the bHLH domain. Residues 256 to 279 (NPDGPNVYDDEDLSDTDEDRDHHH) form a disordered region. The segment covering 263–273 (YDDEDLSDTDE) has biased composition (acidic residues).

As to quaternary structure, efficient DNA binding requires dimerization with another bHLH protein. As to expression, body wall muscle cells; in clonal muscle precursors, in a set of early embryonic blastomeres (the ms-granddaughters), and in six glial-like cells called GLRS.

It is found in the nucleus. In terms of biological role, accumulation defines the body wall muscle cell fate during embryogenesis. The chain is Myoblast determination protein 1 homolog (hlh-1) from Caenorhabditis briggsae.